Reading from the N-terminus, the 224-residue chain is Urease accessory protein UreF (224 aa).

Belongs to the UreF family. As to quaternary structure, ureD, UreF and UreG form a complex that acts as a GTP-hydrolysis-dependent molecular chaperone, activating the urease apoprotein by helping to assemble the nickel containing metallocenter of UreC. The UreE protein probably delivers the nickel.

It localises to the cytoplasm. Its function is as follows. Required for maturation of urease via the functional incorporation of the urease nickel metallocenter. This Azotobacter vinelandii (strain DJ / ATCC BAA-1303) protein is Urease accessory protein UreF.